Consider the following 493-residue polypeptide: Probable cytosol aminopeptidase (493 aa).

2 residues coordinate Mn(2+): Lys-259 and Asp-264. Lys-271 is an active-site residue. Mn(2+) contacts are provided by Asp-282, Asp-341, and Glu-343. Arg-345 is an active-site residue.

It belongs to the peptidase M17 family. Mn(2+) is required as a cofactor.

It localises to the cytoplasm. It carries out the reaction Release of an N-terminal amino acid, Xaa-|-Yaa-, in which Xaa is preferably Leu, but may be other amino acids including Pro although not Arg or Lys, and Yaa may be Pro. Amino acid amides and methyl esters are also readily hydrolyzed, but rates on arylamides are exceedingly low.. The enzyme catalyses Release of an N-terminal amino acid, preferentially leucine, but not glutamic or aspartic acids.. Functionally, presumably involved in the processing and regular turnover of intracellular proteins. Catalyzes the removal of unsubstituted N-terminal amino acids from various peptides. The polypeptide is Probable cytosol aminopeptidase (Bacillus cytotoxicus (strain DSM 22905 / CIP 110041 / 391-98 / NVH 391-98)).